The chain runs to 238 residues: Fmr1 neighbor protein (238 aa).

Residues 1–30 (MPSDRRPSQRRNRSKSRDYRGARSKVTRAD) are disordered. The Cytoplasmic segment spans residues 1–79 (MPSDRRPSQR…CLQYLWARRH (79 aa)). The span at 15-30 (KSRDYRGARSKVTRAD) shows a compositional bias: basic and acidic residues. Residues 80–100 (LGLLLLLFWTLVILFRPVNTA) traverse the membrane as a helical segment. The Extracellular portion of the chain corresponds to 101 to 178 (KLPILAEAAE…VRDKPTQVLR (78 aa)). The P-type domain maps to 118 to 176 (MLDFFFPTACIIRDNQVVVACNNQPYLSESECLKSKCCSSTSGTIIKCYAPVRDKPTQV). Residues 179-199 (VFGLAAISILVLGFLPMCCCS) form a helical membrane-spanning segment. Over 200 to 238 (MCWRRKRMNRMLKVLKKQKSKGKKPKGRKASEERALLSH) the chain is Cytoplasmic. Over residues 214-227 (LKKQKSKGKKPKGR) the composition is skewed to basic residues. A disordered region spans residues 214–238 (LKKQKSKGKKPKGRKASEERALLSH). Residues 228–238 (KASEERALLSH) show a composition bias toward basic and acidic residues.

The protein resides in the membrane. The chain is Fmr1 neighbor protein from Mus musculus (Mouse).